A 968-amino-acid chain; its full sequence is Phosphoenolpyruvate carboxylase 3 (968 aa).

At S11 the chain carries Phosphoserine. Active-site residues include H173 and K603. S705 is modified (phosphoserine).

Belongs to the PEPCase type 1 family. As to quaternary structure, homotetramer. Mg(2+) is required as a cofactor. Expressed in roots and siliques, and to a lower extent in stems, leaves and flowers.

The protein resides in the cytoplasm. It catalyses the reaction oxaloacetate + phosphate = phosphoenolpyruvate + hydrogencarbonate. By light-reversible phosphorylation. Its function is as follows. Through the carboxylation of phosphoenolpyruvate (PEP) it forms oxaloacetate, a four-carbon dicarboxylic acid source for the tricarboxylic acid cycle. This Arabidopsis thaliana (Mouse-ear cress) protein is Phosphoenolpyruvate carboxylase 3 (PPC3).